The chain runs to 357 residues: Peptide chain release factor 1 (357 aa).

Q232 carries the N5-methylglutamine modification.

The protein belongs to the prokaryotic/mitochondrial release factor family. Methylated by PrmC. Methylation increases the termination efficiency of RF1.

The protein resides in the cytoplasm. Its function is as follows. Peptide chain release factor 1 directs the termination of translation in response to the peptide chain termination codons UAG and UAA. This is Peptide chain release factor 1 from Maridesulfovibrio salexigens (strain ATCC 14822 / DSM 2638 / NCIMB 8403 / VKM B-1763) (Desulfovibrio salexigens).